We begin with the raw amino-acid sequence, 434 residues long: GTPase Obg (434 aa).

Residues Ala-4–Leu-162 enclose the Obg domain. Positions Ala-163–Lys-333 constitute an OBG-type G domain. GTP contacts are provided by residues Gly-169–Ser-176, Phe-194–Ile-198, Asp-215–Gly-218, Asn-285–Asp-288, and Ser-314–Ile-316. Mg(2+)-binding residues include Ser-176 and Thr-196. The OCT domain occupies Leu-355 to Glu-434.

This sequence belongs to the TRAFAC class OBG-HflX-like GTPase superfamily. OBG GTPase family. In terms of assembly, monomer. It depends on Mg(2+) as a cofactor.

It localises to the cytoplasm. Functionally, an essential GTPase which binds GTP, GDP and possibly (p)ppGpp with moderate affinity, with high nucleotide exchange rates and a fairly low GTP hydrolysis rate. Plays a role in control of the cell cycle, stress response, ribosome biogenesis and in those bacteria that undergo differentiation, in morphogenesis control. This Thermosipho africanus (strain TCF52B) protein is GTPase Obg.